Consider the following 180-residue polypeptide: Adipocyte-related X-chromosome expressed sequence 1 (180 aa).

The Cytoplasmic portion of the chain corresponds to 1-11 (MNSLLSRANSL). A helical; Signal-anchor for type II membrane protein transmembrane segment spans residues 12–32 (FAFTLSVMAALTLGCILTTAF). Topologically, residues 33–180 (KDRSAPVRLH…PDSYEIATTF (148 aa)) are lumenal. N-linked (GlcNAc...) asparagine glycosylation is present at N141.

The protein belongs to the SPCS3 family. As to expression, strongly expressed in epididymal white and brown adipose tissue with low levels in heart.

The protein resides in the endoplasmic reticulum membrane. Functionally, plays a role in adipogenesis. The protein is Adipocyte-related X-chromosome expressed sequence 1 of Mus musculus (Mouse).